A 401-amino-acid chain; its full sequence is Tryptophan synthase beta chain (401 aa).

The residue at position 92 (K92) is an N6-(pyridoxal phosphate)lysine.

It belongs to the TrpB family. As to quaternary structure, tetramer of two alpha and two beta chains. It depends on pyridoxal 5'-phosphate as a cofactor.

It carries out the reaction (1S,2R)-1-C-(indol-3-yl)glycerol 3-phosphate + L-serine = D-glyceraldehyde 3-phosphate + L-tryptophan + H2O. The protein operates within amino-acid biosynthesis; L-tryptophan biosynthesis; L-tryptophan from chorismate: step 5/5. Its function is as follows. The beta subunit is responsible for the synthesis of L-tryptophan from indole and L-serine. This is Tryptophan synthase beta chain from Vesicomyosocius okutanii subsp. Calyptogena okutanii (strain HA).